The following is a 345-amino-acid chain: Nuclear distribution protein nudE-like 1-A (345 aa).

Residues 19-190 are a coiled coil; the sequence is WRELSKRLKQ…LAVRERQTDG (172 aa). Residues 182–192 are compositionally biased toward basic and acidic residues; it reads AVRERQTDGTR. Disordered stretches follow at residues 182–206 and 326–345; these read AVRE…CDKT and PPGV…PLSV. Residues 334 to 345 show a composition bias toward pro residues; sequence PPSPPGMLPLSV.

The protein belongs to the nudE family. In terms of processing, phosphorylated in mitosis.

It localises to the cytoplasm. It is found in the cytoskeleton. The protein resides in the microtubule organizing center. The protein localises to the centrosome. Its subcellular location is the spindle. Its function is as follows. Required for organization of the cellular microtubule array and microtubule anchoring at the centrosome. Positively regulates the activity of the minus-end directed microtubule motor protein dynein. May enhance dynein-mediated microtubule sliding by targeting dynein to the microtubule plus end. Positively regulates lysosome peripheral distribution and ruffled border formation in osteoclasts. The sequence is that of Nuclear distribution protein nudE-like 1-A (ndel1-a) from Xenopus laevis (African clawed frog).